Reading from the N-terminus, the 366-residue chain is 3-dehydroquinate synthase (366 aa).

NAD(+)-binding positions include 71-76 (DGEQYK), 105-109 (GVIGD), 129-130 (TT), K142, K151, and 169-172 (CLQT). Positions 184, 248, and 265 each coordinate Zn(2+).

This sequence belongs to the sugar phosphate cyclases superfamily. Dehydroquinate synthase family. The cofactor is NAD(+). Requires Co(2+) as cofactor. Zn(2+) is required as a cofactor.

It is found in the cytoplasm. The enzyme catalyses 7-phospho-2-dehydro-3-deoxy-D-arabino-heptonate = 3-dehydroquinate + phosphate. Its pathway is metabolic intermediate biosynthesis; chorismate biosynthesis; chorismate from D-erythrose 4-phosphate and phosphoenolpyruvate: step 2/7. Catalyzes the conversion of 3-deoxy-D-arabino-heptulosonate 7-phosphate (DAHP) to dehydroquinate (DHQ). This Photorhabdus laumondii subsp. laumondii (strain DSM 15139 / CIP 105565 / TT01) (Photorhabdus luminescens subsp. laumondii) protein is 3-dehydroquinate synthase.